The chain runs to 350 residues: S-adenosylmethionine:tRNA ribosyltransferase-isomerase (350 aa).

It belongs to the QueA family. As to quaternary structure, monomer.

The protein localises to the cytoplasm. The catalysed reaction is 7-aminomethyl-7-carbaguanosine(34) in tRNA + S-adenosyl-L-methionine = epoxyqueuosine(34) in tRNA + adenine + L-methionine + 2 H(+). The protein operates within tRNA modification; tRNA-queuosine biosynthesis. Transfers and isomerizes the ribose moiety from AdoMet to the 7-aminomethyl group of 7-deazaguanine (preQ1-tRNA) to give epoxyqueuosine (oQ-tRNA). This Bacillus thuringiensis subsp. konkukian (strain 97-27) protein is S-adenosylmethionine:tRNA ribosyltransferase-isomerase.